The primary structure comprises 5100 residues: Hemicentin-2 (5100 aa).

The first 19 residues, 1–19 (MTPGAQLLPLLVAISTAVA), serve as a signal peptide directing secretion. A VWFA domain is found at 37-211 (DATLAFVFDV…QVSEVLKWVE (175 aa)). Residues Asn330, Asn347, Asn380, Asn479, Asn526, Asn548, and Asn675 are each glycosylated (N-linked (GlcNAc...) asparagine). Ig-like C2-type domains are found at residues 426–515 (PGVP…IVIT), 517–601 (PPPQ…RATT), 609–692 (PQVS…ETVT), 699–782 (PSVS…IQLV), 787–877 (PRLT…LVVT), 882–968 (PQIA…VELV), 973–1058 (PRIH…MWLS), 1063–1156 (PMIK…YVLR), 1161–1239 (PQVQ…WKLE), 1246–1335 (PHWG…AKLV), 1340–1437 (PSIR…FNLA), 1442–1531 (PSLL…FQLS), 1536–1624 (PTIW…TSLE), 1629–1717 (PTIE…YSVE), 1722–1810 (PQLL…VEVS), 1825–1913 (SAHH…KDVT), 1920–2008 (PNIE…LRVN), 2011–2100 (PRIT…VILQ), 2105–2189 (PSIL…KHFN), 2196–2285 (PAFP…QSLE), 2290–2379 (PQVT…FALS), 2384–2473 (PHLT…FSVE), 2478–2566 (PSIE…TQLS), 2571–2662 (PTIL…YHVE), 2667–2758 (PSIS…QDFN), 2781–2871 (PHEE…YELL), 2875–2964 (PPVI…KLFT), 2971–3058 (PQIS…VQLN), 3063–3153 (PSFK…FVLA), 3157–3245 (PPTF…FVVS), 3250–3340 (PQIQ…HTVN), 3345–3432 (PTIK…RNFT), 3438–3523 (PPIL…FQLT), 3528–3609 (PHIE…FRVR), 3614–3702 (PNVV…FRVE), 3707–3793 (PTIQ…LDLR), 3798–3886 (PAIA…YQVT), 3891–3977 (PTIA…MVLT), 3982–4067 (PVVK…TRLV), 4071–4158 (PPVI…VHLT), 4163–4244 (PVLT…QAVS), 4252–4336 (PVLQ…KVVT), and 4343–4428 (PVFQ…ALLA). Residues Cys449 and Cys497 are joined by a disulfide bond. 6 disulfide bridges follow: Cys539/Cys588, Cys630/Cys678, Cys720/Cys766, Cys808/Cys859, Cys903/Cys952, and Cys994/Cys1042. Arg909, Arg914, and Arg915 each carry omega-N-methylarginine. Asn1024 and Asn1068 each carry an N-linked (GlcNAc...) asparagine glycan. Disulfide bonds link Cys1091/Cys1140 and Cys1182/Cys1225. Asn1264 is a glycosylation site (N-linked (GlcNAc...) asparagine). The interval 1265-1293 (ASLPCPAQGTPKPRITWRRGPSSEPLNGR) is disordered. A disulfide bridge connects residues Cys1269 and Cys1319. The N-linked (GlcNAc...) asparagine glycan is linked to Asn1350. Cystine bridges form between Cys1363-Cys1421 and Cys1465-Cys1515. An N-linked (GlcNAc...) asparagine glycan is attached at Asn1542. 4 disulfide bridges follow: Cys1559/Cys1608, Cys1653/Cys1701, Cys1745/Cys1794, and Cys1846/Cys1899. 2 N-linked (GlcNAc...) asparagine glycosylation sites follow: Asn1676 and Asn1787. Asn1934 is a glycosylation site (N-linked (GlcNAc...) asparagine). 2 cysteine pairs are disulfide-bonded: Cys1941–Cys1990 and Cys2033–Cys2084. N-linked (GlcNAc...) asparagine glycans are attached at residues Asn2034, Asn2113, and Asn2119. 2 disulfides stabilise this stretch: Cys2126–Cys2175 and Cys2218–Cys2269. N-linked (GlcNAc...) asparagine glycosylation is found at Asn2309, Asn2315, Asn2345, and Asn2395. The cysteines at positions 2314 and 2363 are disulfide-linked. Cys2408 and Cys2457 form a disulfide bridge. 5 N-linked (GlcNAc...) asparagine glycosylation sites follow: Asn2469, Asn2502, Asn2541, Asn2606, and Asn2688. 2 disulfides stabilise this stretch: Cys2501-Cys2550 and Cys2597-Cys2646. 2 cysteine pairs are disulfide-bonded: Cys2695/Cys2744 and Cys2806/Cys2855. N-linked (GlcNAc...) asparagine glycosylation occurs at Asn2892. A disulfide bridge links Cys2901 with Cys2950. The N-linked (GlcNAc...) asparagine glycan is linked to Asn2986. 5 disulfide bridges follow: Cys2993-Cys3042, Cys3088-Cys3137, Cys3180-Cys3229, Cys3273-Cys3324, and Cys3369-Cys3418. Residue Asn3430 is glycosylated (N-linked (GlcNAc...) asparagine). Intrachain disulfides connect Cys3462-Cys3507, Cys3551-Cys3593, and Cys3637-Cys3686. Residues Asn3560 and Asn3575 are each glycosylated (N-linked (GlcNAc...) asparagine). Residues Asn3717 and Asn3721 are each glycosylated (N-linked (GlcNAc...) asparagine). Cys3728 and Cys3777 are oxidised to a cystine. Asn3806 is a glycosylation site (N-linked (GlcNAc...) asparagine). Disulfide bonds link Cys3819–Cys3870, Cys3912–Cys3961, Cys4003–Cys4051, Cys4093–Cys4142, Cys4184–Cys4231, Cys4274–Cys4322, and Cys4364–Cys4412. N-linked (GlcNAc...) asparagine glycosylation occurs at Asn4304. In terms of domain architecture, Nidogen G2 beta-barrel spans 4432-4654 (EPRGSRGSMT…QTEENEVGCP (223 aa)). Residues Asn4455 and Asn4601 are each glycosylated (N-linked (GlcNAc...) asparagine). The EGF-like 1; calcium-binding domain occupies 4668 to 4708 (DKDECSGGPSPCSHTCRNAPGHFSCSCPTGFSLAWDHRNCR). 11 cysteine pairs are disulfide-bonded: Cys4672–Cys4683, Cys4679–Cys4692, Cys4694–Cys4707, Cys4713–Cys4726, Cys4720–Cys4735, Cys4739–Cys4752, Cys4758–Cys4771, Cys4765–Cys4780, Cys4801–Cys4812, Cys4808–Cys4821, and Cys4823–Cys4836. The EGF-like 2; calcium-binding domain maps to 4709–4753 (DVDECAGNTHLCQEEQRCVNLLGSYNCLASCRPGFRVTADGSNCE). Positions 4754-4789 (DVDECLEQLDECHYNQLCENTPGGHHCGCPRGYRQQ) constitute an EGF-like 3; calcium-binding domain. The region spanning 4797–4837 (DINECLQLPTPCVYQCQNLQGSYRCLCPPGQTLLRDGRTCI) is the EGF-like 4; calcium-binding domain. A glycan (N-linked (GlcNAc...) asparagine) is linked at Asn4845. The EGF-like 5; calcium-binding domain maps to 4904 to 4943 (DLDECRVRSLCQHACQNTEGSYYCLCPSGYRLLPSGKNCQ). 3 disulfides stabilise this stretch: Cys4908-Cys4918, Cys4914-Cys4927, and Cys4929-Cys4942. Residue Asn5035 is glycosylated (N-linked (GlcNAc...) asparagine).

Reported to be phosphorylated; however as this position is extracellular, the in vivo relevance is unsure. In terms of tissue distribution, in neonatal skin, localized in the pericellular space of basal epidermal keratinocytes (at protein level). In adult skin, restricted to basal keratinocytes of hair follicles and the interfollicular epidermis. Absent from the myotendinous junction but present in skeletal muscle (at protein level). Expressed in the pericellular extracellular matrix of epithelial cells in a number of tissues including embryonic trophectoderm and adult skin and tongue. Also present in the extracellular matrix of some, but not all, blood vessels. Expressed primarily in epithelial cells in the embryonic epidermis, lung, intestine, skeletal hindlimb muscle, tongue and the muscular layers of the esophagus.

Its subcellular location is the secreted. It localises to the extracellular space. It is found in the extracellular matrix. The protein localises to the cleavage furrow. The protein is Hemicentin-2 (Hmcn2) of Mus musculus (Mouse).